The primary structure comprises 355 residues: tRNA N6-adenosine threonylcarbamoyltransferase (355 aa).

His-111 and His-115 together coordinate Fe cation. Substrate is bound by residues 134-138, Asp-167, Gly-180, Asp-184, and Asn-279; that span reads LVSGG. Asp-307 is a binding site for Fe cation.

The protein belongs to the KAE1 / TsaD family. The cofactor is Fe(2+).

The protein localises to the cytoplasm. The catalysed reaction is L-threonylcarbamoyladenylate + adenosine(37) in tRNA = N(6)-L-threonylcarbamoyladenosine(37) in tRNA + AMP + H(+). Functionally, required for the formation of a threonylcarbamoyl group on adenosine at position 37 (t(6)A37) in tRNAs that read codons beginning with adenine. Is involved in the transfer of the threonylcarbamoyl moiety of threonylcarbamoyl-AMP (TC-AMP) to the N6 group of A37, together with TsaE and TsaB. TsaD likely plays a direct catalytic role in this reaction. The polypeptide is tRNA N6-adenosine threonylcarbamoyltransferase (Picosynechococcus sp. (strain ATCC 27264 / PCC 7002 / PR-6) (Agmenellum quadruplicatum)).